The following is a 192-amino-acid chain: Thymidine kinase (192 aa).

Residues 9 to 16 (SAMNAGKS) and 87 to 90 (DECQ) each bind ATP. The active-site Proton acceptor is the E88. Zn(2+) is bound by residues C145, C147, C182, and H185.

It belongs to the thymidine kinase family. As to quaternary structure, homotetramer.

The protein localises to the cytoplasm. It carries out the reaction thymidine + ATP = dTMP + ADP + H(+). This is Thymidine kinase from Vibrio cholerae serotype O1 (strain ATCC 39315 / El Tor Inaba N16961).